A 499-amino-acid chain; its full sequence is MLACPSTSSPWPQRQPPSPCPGGGGGATRHVALAARSKRRGAGPAAAEGVDEAAAEAAELVRSLLRRTAGGKERLVPVLDRHVRVVRTEHCFLLFEELGRRDAWLQCLDVFRWMQKQRWYVADNGIYSKLISVMGRKGQIRMAMWLFSQMRNSGCKPDTSVYNSLIGAHLHSRDKTKALAKALGYFEKMKCIERCQPTIVTYNILLRAFAQAGDTKQVDMLFKDLDESVVSPDVYTYNGVLDAYGKNGMIKEMESVLVRMKSTQCRPDVITFNILIDSYGRKQTFDKMEQVFKSLLRSKERPTHPTFNSMITNYGRARLREKAESVVEKMEELGFKPNYVTQECLIIMYAHCDCVSKARQVFDELVTSQTKVHLSSLNSMLEAYCMNGLHTEADRLLDTALQQCVVPNGSTYKLLYKAYTKANDKLLVQKLLKRMNKQGIVPNKKFFLDALEAFGTSDRKPRTSPGINSASKPSTDSAGDSETATSDKPEVSVWHVAAT.

Residues 1-12 (MLACPSTSSPWP) show a composition bias toward low complexity. The segment at 1–28 (MLACPSTSSPWPQRQPPSPCPGGGGGAT) is disordered. A chloroplast-targeting transit peptide spans 1-45 (MLACPSTSSPWPQRQPPSPCPGGGGGATRHVALAARSKRRGAGPA). 9 PPR repeats span residues 123–157 (DNGIYSKLISVMGRKGQIRMAMWLFSQMRNSGCKP), 158–193 (DTSVYNSLIGAHLHSRDKTKALAKALGYFEKMKCIE), 198–232 (TIVTYNILLRAFAQAGDTKQVDMLFKDLDESVVSP), 233–267 (DVYTYNGVLDAYGKNGMIKEMESVLVRMKSTQCRP), 268–302 (DVITFNILIDSYGRKQTFDKMEQVFKSLLRSKERP), 303–337 (THPTFNSMITNYGRARLREKAESVVEKMEELGFKP), 338–372 (NYVTQECLIIMYAHCDCVSKARQVFDELVTSQTKV), 373–407 (HLSSLNSMLEAYCMNGLHTEADRLLDTALQQCVVP), and 408–442 (NGSTYKLLYKAYTKANDKLLVQKLLKRMNKQGIVP). Positions 458–499 (DRKPRTSPGINSASKPSTDSAGDSETATSDKPEVSVWHVAAT) are disordered. The span at 465–484 (PGINSASKPSTDSAGDSETA) shows a compositional bias: polar residues.

Belongs to the PPR family. P subfamily.

The protein resides in the plastid. It localises to the chloroplast. Involved in the biogenesis of the plastid translation machinery by promoting the splicing of group II introns in chloroplasts. Stabilizes the chloroplast trnG pre-RNA by directly binding to a group II intron, where it protects an endonuclease-sensitive site and stimulates splicing. Binds specific sites within group II intron trnG pre-RNA. Binds with high affinity to the 5'-UTR of the chloroplastic petA mRNA. The polypeptide is Pentatricopeptide repeat-containing protein PPR5, chloroplastic (Zea mays (Maize)).